Here is a 416-residue protein sequence, read N- to C-terminus: DNA-guanine transglycosylase (416 aa).

Residue Asp-95 is the Proton acceptor of the active site. Asp-256 functions as the Nucleophile in the catalytic mechanism. Residues Cys-368, Cys-370, Cys-373, and His-395 each coordinate Zn(2+).

Belongs to the DNA-guanine transglycosylase family. Zn(2+) serves as cofactor.

Functionally, part of the dpd cluster involved in the insertion of 7-deazaguanine derivatives in DNA. DpdA may insert 7-cyano-7-deazaguanine (preQ0) into DNA with the help of DpdB. DpdA and dpdB are necessary and sufficient to synthesize 2'-deoxy-7-cyano-7-deazaguanosine (dPreQ0). This chain is DNA-guanine transglycosylase, found in Salmonella montevideo.